A 170-amino-acid polypeptide reads, in one-letter code: Negative modulator of initiation of replication (170 aa).

The tract at residues 139 to 145 (NTNTGRK) is interaction with DNA.

It belongs to the SeqA family. As to quaternary structure, homodimer. Polymerizes to form helical filaments.

It localises to the cytoplasm. Its function is as follows. Negative regulator of replication initiation, which contributes to regulation of DNA replication and ensures that replication initiation occurs exactly once per chromosome per cell cycle. Binds to pairs of hemimethylated GATC sequences in the oriC region, thus preventing assembly of replication proteins and re-initiation at newly replicated origins. Repression is relieved when the region becomes fully methylated. This is Negative modulator of initiation of replication from Tolumonas auensis (strain DSM 9187 / NBRC 110442 / TA 4).